A 129-amino-acid chain; its full sequence is Small ribosomal subunit protein uS11 (129 aa).

The protein belongs to the universal ribosomal protein uS11 family. Part of the 30S ribosomal subunit. Interacts with proteins S7 and S18. Binds to IF-3.

Located on the platform of the 30S subunit, it bridges several disparate RNA helices of the 16S rRNA. Forms part of the Shine-Dalgarno cleft in the 70S ribosome. The polypeptide is Small ribosomal subunit protein uS11 (Photobacterium profundum (strain SS9)).